The following is a 177-amino-acid chain: Large ribosomal subunit protein uL6 (177 aa).

This sequence belongs to the universal ribosomal protein uL6 family. In terms of assembly, part of the 50S ribosomal subunit.

In terms of biological role, this protein binds to the 23S rRNA, and is important in its secondary structure. It is located near the subunit interface in the base of the L7/L12 stalk, and near the tRNA binding site of the peptidyltransferase center. The polypeptide is Large ribosomal subunit protein uL6 (Laribacter hongkongensis (strain HLHK9)).